The sequence spans 223 residues: Type III pantothenate kinase (223 aa).

Position 17–24 (17–24) interacts with ATP; sequence DIGNTRIH. Residues Tyr81 and 85 to 88 each bind substrate; that span reads GIDR. The active-site Proton acceptor is Asp87. Position 102 (Asp102) interacts with K(+). Residue Ser105 coordinates ATP. A substrate-binding site is contributed by Thr157.

It belongs to the type III pantothenate kinase family. As to quaternary structure, homodimer. It depends on NH4(+) as a cofactor. K(+) is required as a cofactor.

It localises to the cytoplasm. It catalyses the reaction (R)-pantothenate + ATP = (R)-4'-phosphopantothenate + ADP + H(+). The protein operates within cofactor biosynthesis; coenzyme A biosynthesis; CoA from (R)-pantothenate: step 1/5. With respect to regulation, not regulated by feedback inhibition by CoA and its thioesters as described for many other pantothenate kinases. Not inhibited by N-pentylpantothenamide (N5-Pan), and this compound cannot act as a substrate either. Its function is as follows. Catalyzes the phosphorylation of pantothenate (Pan), the first step in CoA biosynthesis. Can also utilize CTP or GTP instead of ATP as a phosphoryl donor, albeit to a lesser extent. The sequence is that of Type III pantothenate kinase (coaX) from Helicobacter pylori (strain ATCC 700392 / 26695) (Campylobacter pylori).